The primary structure comprises 201 residues: Large ribosomal subunit protein uL4 (201 aa).

The interval 43–69 is disordered; it reads TKAQKGRSDVSGGGAKPWKQKGSGRAR.

It belongs to the universal ribosomal protein uL4 family. Part of the 50S ribosomal subunit.

Its function is as follows. One of the primary rRNA binding proteins, this protein initially binds near the 5'-end of the 23S rRNA. It is important during the early stages of 50S assembly. It makes multiple contacts with different domains of the 23S rRNA in the assembled 50S subunit and ribosome. Forms part of the polypeptide exit tunnel. This chain is Large ribosomal subunit protein uL4, found in Thioalkalivibrio sulfidiphilus (strain HL-EbGR7).